The following is a 103-amino-acid chain: Large ribosomal subunit protein uL23 (103 aa).

It belongs to the universal ribosomal protein uL23 family. As to quaternary structure, part of the 50S ribosomal subunit. Contacts protein L29, and trigger factor when it is bound to the ribosome.

One of the early assembly proteins it binds 23S rRNA. One of the proteins that surrounds the polypeptide exit tunnel on the outside of the ribosome. Forms the main docking site for trigger factor binding to the ribosome. This chain is Large ribosomal subunit protein uL23, found in Chlorobium chlorochromatii (strain CaD3).